A 314-amino-acid chain; its full sequence is WD repeat domain-containing protein 83 (314 aa).

WD repeat units follow at residues 23-62 (CNQGAVRAVRFNVDGNYCMTCGSDKTLKLWNPHKGTLLKT), 65-104 (GHGYEVLDTAGSYDNSQMCSCSSDKTVILWDVAQGQVVRK), 107-146 (GHAGKVNCVQFNEEATVIMSGSIDSSIRCWDCRSRRPEAI), 151-188 (EAKDGISSIKISDHEILAGSVDGNLRRYDLRKGEMCAD), 189-228 (YLGSPITCVSFSQDSQCLLASSLDSTLRLLDKDTGELLGE), 231-272 (GHQN…LVLK), and 275-313 (VGKAAVQSLSFHPSECCLLTASEGGVQLWRGASYEEEGG).

Belongs to the WD repeat MORG1 family.

It localises to the cytoplasm. Its function is as follows. Molecular scaffold protein for various multimeric protein complexes. Acts as a module in the assembly of a multicomponent scaffold for the ERK pathway, linking ERK responses to specific agonists. Also involved in response to hypoxia by acting as a negative regulator of HIF1A/HIF-1-alpha. The protein is WD repeat domain-containing protein 83 (wdr83) of Xenopus tropicalis (Western clawed frog).